The sequence spans 147 residues: Hemoglobin subunit epsilon (147 aa).

In terms of domain architecture, Globin spans 3-147 (HFTAEEKAAI…VAIALGHKYH (145 aa)). Ser-14 and Ser-51 each carry phosphoserine. Positions 64 and 93 each coordinate heme b.

This sequence belongs to the globin family. Heterotetramer of two alpha chains and two epsilon chains in early embryonic hemoglobin Gower-2; two zeta chains and two epsilon chains in early embryonic hemoglobin Gower-1. In terms of tissue distribution, red blood cells.

In terms of biological role, the epsilon chain is a beta-type chain of early mammalian embryonic hemoglobin. This is Hemoglobin subunit epsilon (HBE1) from Leontopithecus rosalia (Golden lion tamarin).